We begin with the raw amino-acid sequence, 183 residues long: Ribosome maturation factor RimM (183 aa).

One can recognise a PRC barrel domain in the interval 104-183; the sequence is EGDYYWKDLM…TIEVDWDPGF (80 aa).

It belongs to the RimM family. Binds ribosomal protein uS19.

It is found in the cytoplasm. An accessory protein needed during the final step in the assembly of 30S ribosomal subunit, possibly for assembly of the head region. Essential for efficient processing of 16S rRNA. May be needed both before and after RbfA during the maturation of 16S rRNA. It has affinity for free ribosomal 30S subunits but not for 70S ribosomes. This Salmonella choleraesuis (strain SC-B67) protein is Ribosome maturation factor RimM.